The sequence spans 116 residues: Large ribosomal subunit protein uL18 (116 aa).

Belongs to the universal ribosomal protein uL18 family. As to quaternary structure, part of the 50S ribosomal subunit; part of the 5S rRNA/L5/L18/L25 subcomplex. Contacts the 5S and 23S rRNAs.

This is one of the proteins that bind and probably mediate the attachment of the 5S RNA into the large ribosomal subunit, where it forms part of the central protuberance. This chain is Large ribosomal subunit protein uL18, found in Pseudomonas putida (strain GB-1).